Reading from the N-terminus, the 403-residue chain is Cytochrome P450-SU2 (403 aa).

The segment at 1–24 is disordered; sequence MTTAERTAPPDALTVPASRAPGCP. Cysteine 352 contacts heme.

The protein belongs to the cytochrome P450 family. Requires heme as cofactor.

Its function is as follows. Metabolism of a number of sulfonylurea herbicides. This chain is Cytochrome P450-SU2 (cyp105B1), found in Streptomyces griseolus.